The sequence spans 278 residues: Aliphatic sulfonates import ATP-binding protein SsuB (278 aa).

The ABC transporter domain maps to 15–236; sequence LVLRDLSKRF…SQGDAAFAAL (222 aa). An ATP-binding site is contributed by 47-54; it reads GRSGCGKS. The span at 251 to 264 shows a compositional bias: basic and acidic residues; sequence PERESFTHPNDGEP. Residues 251-278 form a disordered region; it reads PERESFTHPNDGEPRWPGVPAHGVRWAV.

It belongs to the ABC transporter superfamily. Aliphatic sulfonates importer (TC 3.A.1.17.2) family. As to quaternary structure, the complex is composed of two ATP-binding proteins (SsuB), two transmembrane proteins (SsuC) and a solute-binding protein (SsuA).

The protein localises to the cell inner membrane. The enzyme catalyses ATP + H2O + aliphatic sulfonate-[sulfonate-binding protein]Side 1 = ADP + phosphate + aliphatic sulfonateSide 2 + [sulfonate-binding protein]Side 1.. Part of the ABC transporter complex SsuABC involved in aliphatic sulfonates import. Responsible for energy coupling to the transport system. The sequence is that of Aliphatic sulfonates import ATP-binding protein SsuB from Albidiferax ferrireducens (strain ATCC BAA-621 / DSM 15236 / T118) (Rhodoferax ferrireducens).